Here is a 948-residue protein sequence, read N- to C-terminus: Protocadherin alpha-2 (948 aa).

An N-terminal signal peptide occupies residues 1 to 22 (MASSIRRGRGAWTRLLSLLLLA). Over 23–697 (AWEVGSGQLR…GSEATLVDVN (675 aa)) the chain is Extracellular. Cadherin domains follow at residues 30–133 (QLRY…PPIF), 157–242 (ASDA…EPTF), 243–350 (AQSV…TPEV), 351–455 (SITS…APAF), 456–565 (AQPE…APAL), and 588–678 (GHVV…APKA). 4 N-linked (GlcNAc...) asparagine glycosylation sites follow: Asn-257, Asn-265, Asn-362, and Asn-548. Residues 698–718 (VYLIIAICAVSSLLVLTVLLY) form a helical membrane-spanning segment. The Cytoplasmic segment spans residues 719-948 (TALRCSVPPT…GNSTTDNSDQ (230 aa)). One copy of the PXXP 1 repeat lies at 734–737 (PGKP). The segment at 734–892 (PGKPTLVCSS…PDKFIIPGSP (159 aa)) is 5 X 4 AA repeats of P-X-X-P. Disordered regions lie at residues 754-801 (RRQR…RQPN), 829-854 (GPGGPDQQWPTVSSATPEPEAGEVSP), and 868-948 (KYGP…NSDQ). Over residues 783–795 (AEEKQLSESEYVG) the composition is skewed to basic and acidic residues. PXXP repeat units lie at residues 797–800 (PRQP), 830–833 (PGGP), 871–874 (PGNP), and 889–892 (PGSP). A compositionally biased stretch (basic and acidic residues) spans 907-921 (DKSDFITFGKKEETK).

The protein resides in the cell membrane. In terms of biological role, potential calcium-dependent cell-adhesion protein. May be involved in the establishment and maintenance of specific neuronal connections in the brain. The chain is Protocadherin alpha-2 (PCDHA2) from Homo sapiens (Human).